Reading from the N-terminus, the 615-residue chain is 1-deoxy-D-xylulose-5-phosphate synthase (615 aa).

Thiamine diphosphate is bound by residues histidine 77 and 118–120; that span reads GHS. Position 149 (aspartate 149) interacts with Mg(2+). Thiamine diphosphate-binding positions include 150 to 151, asparagine 178, tyrosine 286, and glutamate 367; that span reads GA. Asparagine 178 lines the Mg(2+) pocket.

This sequence belongs to the transketolase family. DXPS subfamily. Homodimer. Mg(2+) serves as cofactor. Thiamine diphosphate is required as a cofactor.

It catalyses the reaction D-glyceraldehyde 3-phosphate + pyruvate + H(+) = 1-deoxy-D-xylulose 5-phosphate + CO2. It functions in the pathway metabolic intermediate biosynthesis; 1-deoxy-D-xylulose 5-phosphate biosynthesis; 1-deoxy-D-xylulose 5-phosphate from D-glyceraldehyde 3-phosphate and pyruvate: step 1/1. Its function is as follows. Catalyzes the acyloin condensation reaction between C atoms 2 and 3 of pyruvate and glyceraldehyde 3-phosphate to yield 1-deoxy-D-xylulose-5-phosphate (DXP). The chain is 1-deoxy-D-xylulose-5-phosphate synthase from Glaesserella parasuis serovar 5 (strain SH0165) (Haemophilus parasuis).